A 201-amino-acid polypeptide reads, in one-letter code: IMP cyclohydrolase (201 aa).

The protein belongs to the archaeal IMP cyclohydrolase family.

It catalyses the reaction IMP + H2O = 5-formamido-1-(5-phospho-D-ribosyl)imidazole-4-carboxamide. It participates in purine metabolism; IMP biosynthesis via de novo pathway; IMP from 5-formamido-1-(5-phospho-D-ribosyl)imidazole-4-carboxamide: step 1/1. Its function is as follows. Catalyzes the cyclization of 5-formylamidoimidazole-4-carboxamide ribonucleotide to IMP. The sequence is that of IMP cyclohydrolase from Methanococcus maripaludis (strain C5 / ATCC BAA-1333).